The primary structure comprises 650 residues: MSNTAKKSSRRETRAAASEYIYNLTGQPFPNSHKVYVEGTQNNIRVGMREITLSDTYIGGSDENPVYEPNEPLRVYDTSGPYTDPNFKLDVRQGLAKFREQWIESRGDTELLESVTSRFTQQRMADEGLDHLRFEHLPKIRRGKAGKNVTQMHYARQGIITPEMEYVAIRENMGRKKIHAELLAAQHKGESFGASIPDFITPEFVRDEIARGRAILPNNINHPETEPMIVGRNFLVKVNANIGNSSVSSSIEEEVEKMVWSTRWGADTVMDLSTGRYIHETREWVVRNSPVPIGTVPIYQALEKVNGVAEDLTWEIFRDTLIEQAEQGVDYFTIHAGVLLRYVPMTAKRVTGIVSRGGSIMAKWCLAHHKENFLYTHFEDICEILKQYDICFSLGDGLRPGSIADANDEAQFSELRTLGELTKLAWKHDVQVFIEGPGHVPMHMIKANMDEQLKHCDEAPFYTLGPLTTDIAPGYDHITSGIGAAQIAWYGCAMLCYVTPKEHLGLPNKEDVKEGLITYKIAAHAADLAKGHPGAQERDNALSKARFEFRWHDQFNIGLDPERAREYHDETLPQESGKVAHFCSMCGPKFCSMKISQEVREYAKDLEARGIDPANAADTITIKMIDVEAQMKAKSDEFKKTGSEIYHKAI.

Residues asparagine 241, methionine 270, tyrosine 299, histidine 335, 355-357, 396-399, and glutamate 435 contribute to the substrate site; these read SRG and DGLR. Histidine 439 contacts Zn(2+). Tyrosine 462 is a binding site for substrate. Histidine 503 lines the Zn(2+) pocket. [4Fe-4S] cluster contacts are provided by cysteine 583, cysteine 586, and cysteine 591.

The protein belongs to the ThiC family. In terms of assembly, homodimer. [4Fe-4S] cluster serves as cofactor.

It carries out the reaction 5-amino-1-(5-phospho-beta-D-ribosyl)imidazole + S-adenosyl-L-methionine = 4-amino-2-methyl-5-(phosphooxymethyl)pyrimidine + CO + 5'-deoxyadenosine + formate + L-methionine + 3 H(+). It functions in the pathway cofactor biosynthesis; thiamine diphosphate biosynthesis. Its function is as follows. Catalyzes the synthesis of the hydroxymethylpyrimidine phosphate (HMP-P) moiety of thiamine from aminoimidazole ribotide (AIR) in a radical S-adenosyl-L-methionine (SAM)-dependent reaction. The sequence is that of Phosphomethylpyrimidine synthase from Pseudoalteromonas translucida (strain TAC 125).